Consider the following 320-residue polypeptide: uncharacterized protein (320 aa).

This sequence belongs to the anthranilate phosphoribosyltransferase family.

This is an uncharacterized protein from Escherichia coli (strain K12).